We begin with the raw amino-acid sequence, 475 residues long: Arginine biosynthesis bifunctional protein ArgJ 1, mitochondrial (475 aa).

Substrate contacts are provided by T204, K233, T244, E331, N470, and T475. T244 (nucleophile) is an active-site residue.

Belongs to the ArgJ family. In terms of assembly, heterodimer of an alpha and a beta chain. The alpha and beta chains are autoproteolytically processed from a single precursor protein within the mitochondrion.

Its subcellular location is the mitochondrion matrix. The catalysed reaction is N(2)-acetyl-L-ornithine + L-glutamate = N-acetyl-L-glutamate + L-ornithine. It carries out the reaction L-glutamate + acetyl-CoA = N-acetyl-L-glutamate + CoA + H(+). It functions in the pathway amino-acid biosynthesis; L-arginine biosynthesis; L-ornithine and N-acetyl-L-glutamate from L-glutamate and N(2)-acetyl-L-ornithine (cyclic): step 1/1. The protein operates within amino-acid biosynthesis; L-arginine biosynthesis; N(2)-acetyl-L-ornithine from L-glutamate: step 1/4. Catalyzes two activities which are involved in the cyclic version of arginine biosynthesis: the synthesis of acetylglutamate from glutamate and acetyl-CoA, and of ornithine by transacetylation between acetylornithine and glutamate. This Botryotinia fuckeliana (strain B05.10) (Noble rot fungus) protein is Arginine biosynthesis bifunctional protein ArgJ 1, mitochondrial.